Consider the following 218-residue polypeptide: Small ribosomal subunit protein uS3 (218 aa).

The KH type-2 domain maps to 43-113; the sequence is IREHIERKLA…KVQVNVREVS (71 aa).

This sequence belongs to the universal ribosomal protein uS3 family. In terms of assembly, part of the 30S ribosomal subunit. Forms a tight complex with proteins S10 and S14.

Binds the lower part of the 30S subunit head. Binds mRNA in the 70S ribosome, positioning it for translation. This Rubrobacter xylanophilus (strain DSM 9941 / JCM 11954 / NBRC 16129 / PRD-1) protein is Small ribosomal subunit protein uS3.